We begin with the raw amino-acid sequence, 519 residues long: Methionine--tRNA ligase (519 aa).

The short motif at 11 to 21 is the 'HIGH' region element; the sequence is AYPNAAPHVGH. The 'KMSKS' region motif lies at 299–303; it reads KMSKS. Lys-302 lines the ATP pocket. Positions 500–519 are disordered; sequence LPPPTGVFPRYQPPQPPEGK.

Belongs to the class-I aminoacyl-tRNA synthetase family. MetG type 2B subfamily. As to quaternary structure, monomer.

It is found in the cytoplasm. It catalyses the reaction tRNA(Met) + L-methionine + ATP = L-methionyl-tRNA(Met) + AMP + diphosphate. Its function is as follows. Is required not only for elongation of protein synthesis but also for the initiation of all mRNA translation through initiator tRNA(fMet) aminoacylation. The polypeptide is Methionine--tRNA ligase (Mycobacterium tuberculosis (strain ATCC 25618 / H37Rv)).